Here is a 246-residue protein sequence, read N- to C-terminus: Probable transcriptional regulatory protein GWCH70_2524 (246 aa).

The protein belongs to the TACO1 family.

The protein localises to the cytoplasm. In Geobacillus sp. (strain WCH70), this protein is Probable transcriptional regulatory protein GWCH70_2524.